We begin with the raw amino-acid sequence, 784 residues long: Melanoma-associated antigen D1 (784 aa).

The segment at 41–67 (PTNQATAAASGPNASPQSSQPPSANEV) is disordered. Residues 47–65 (AAASGPNASPQSSQPPSAN) are compositionally biased toward low complexity. The residue at position 97 (tyrosine 97) is a Phosphotyrosine. Polar residues-rich tracts occupy residues 195–214 (PTAE…TSQA), 232–246 (AQTS…NLES), 259–269 (NNLNVEESSSG), and 306–320 (LAWQ…QPAR). Residues 195-339 (PTAETQTQNI…PARQTPPAWQ (145 aa)) form a disordered region. 19 tandem repeats follow at residues 302–307 (WQTPLA), 308–313 (WQNPSG), 314–319 (WQNQPA), 338–343 (WQNPVA), 344–349 (WQNPVI), 350–355 (WPNPVI), 356–361 (WQNPVI), 362–367 (WPNPIV), 368–373 (WPGPVV), 374–379 (WPNPLA), 380–385 (WQNPPG), 386–391 (WQTPPG), 392–397 (WQTPPG), 398–403 (WQGPPD), 404–409 (WQGPPD), 410–415 (WPLPPD), 416–421 (WPLPPD), 422–427 (WPLPTD), and 428–433 (WPLPPD). The segment at 302–450 (WQTPLAWQNP…VPPDWQNLRP (149 aa)) is 22 X 6 AA tandem repeats of W-[PQ]-X-P-X-X. The segment at 379–418 (AWQNPPGWQTPPGWQTPPGWQGPPDWQGPPDWPLPPDWPL) is disordered. A compositionally biased stretch (low complexity) spans 383 to 403 (PPGWQTPPGWQTPPGWQGPPD). Positions 404–418 (WQGPPDWPLPPDWPL) are enriched in pro residues. Residues 434-438 (WIPTD) form a 20; approximate repeat. Tandem repeats lie at residues 439–444 (WPVPPD) and 445–450 (WQNLRP). Positions 441-471 (VPPDWQNLRPSPNLRPSPNSRASQNLGASQP) are disordered. The segment covering 447–461 (NLRPSPNLRPSPNSR) has biased composition (low complexity). The region spanning 477 to 675 (LQERANKLVK…RDWTAQFMEA (199 aa)) is the MAGE domain.

As to quaternary structure, interacts with DLX5, DLX7 and MSX2 and forms homomultimers. Interacts with UNC5A. Interacts with TRIM28 and PJA1. Interacts with NGFR/p75NTR and RORA.

Its subcellular location is the cytoplasm. It localises to the cell membrane. The protein localises to the nucleus. Its function is as follows. Involved in the apoptotic response after nerve growth factor (NGF) binding in neuronal cells. Inhibits cell cycle progression, and facilitates NGFR-mediated apoptosis. May act as a regulator of the function of DLX family members. May enhance ubiquitin ligase activity of RING-type zinc finger-containing E3 ubiquitin-protein ligases. Proposed to act through recruitment and/or stabilization of the Ubl-conjugating enzyme (E2) at the E3:substrate complex. Plays a role in the circadian rhythm regulation. May act as RORA co-regulator, modulating the expression of core clock genes such as BMAL1 and NFIL3, induced, or NR1D1, repressed. The chain is Melanoma-associated antigen D1 (MAGED1) from Sus scrofa (Pig).